The primary structure comprises 482 residues: Proline--tRNA ligase (482 aa).

This sequence belongs to the class-II aminoacyl-tRNA synthetase family. ProS type 3 subfamily. As to quaternary structure, homodimer.

It localises to the cytoplasm. The enzyme catalyses tRNA(Pro) + L-proline + ATP = L-prolyl-tRNA(Pro) + AMP + diphosphate. Catalyzes the attachment of proline to tRNA(Pro) in a two-step reaction: proline is first activated by ATP to form Pro-AMP and then transferred to the acceptor end of tRNA(Pro). The chain is Proline--tRNA ligase from Natronomonas pharaonis (strain ATCC 35678 / DSM 2160 / CIP 103997 / JCM 8858 / NBRC 14720 / NCIMB 2260 / Gabara) (Halobacterium pharaonis).